A 637-amino-acid polypeptide reads, in one-letter code: 1-deoxy-D-xylulose-5-phosphate synthase (637 aa).

Residues His-76 and 117–119 each bind thiamine diphosphate; that span reads GHS. Asp-148 serves as a coordination point for Mg(2+). Residues 149–150, Asn-177, Tyr-294, and Glu-381 each bind thiamine diphosphate; that span reads GA. A Mg(2+)-binding site is contributed by Asn-177.

Belongs to the transketolase family. DXPS subfamily. Homodimer. It depends on Mg(2+) as a cofactor. Requires thiamine diphosphate as cofactor.

The enzyme catalyses D-glyceraldehyde 3-phosphate + pyruvate + H(+) = 1-deoxy-D-xylulose 5-phosphate + CO2. It functions in the pathway metabolic intermediate biosynthesis; 1-deoxy-D-xylulose 5-phosphate biosynthesis; 1-deoxy-D-xylulose 5-phosphate from D-glyceraldehyde 3-phosphate and pyruvate: step 1/1. In terms of biological role, catalyzes the acyloin condensation reaction between C atoms 2 and 3 of pyruvate and glyceraldehyde 3-phosphate to yield 1-deoxy-D-xylulose-5-phosphate (DXP). In Neisseria gonorrhoeae (strain ATCC 700825 / FA 1090), this protein is 1-deoxy-D-xylulose-5-phosphate synthase.